Reading from the N-terminus, the 510-residue chain is NAD(P)H-quinone oxidoreductase subunit 2 B, chloroplastic (510 aa).

13 helical membrane passes run 24–44, 57–77, 99–119, 124–144, 149–169, 183–203, 227–247, 295–315, 323–343, 347–367, 395–415, 418–438, and 482–502; these read LLLF…GLIL, IPWL…ALLF, IFQF…VEYI, MAIT…MFLC, LITI…LSGY, YLLM…WLYG, PGIS…LSPA, WHLL…LIAI, MLAY…IVGD, GYAS…GTFA, ALSL…AGFF, LHLF…IGLL, and LSMI…NPII.

The protein belongs to the complex I subunit 2 family. As to quaternary structure, NDH is composed of at least 16 different subunits, 5 of which are encoded in the nucleus.

The protein resides in the plastid. It is found in the chloroplast thylakoid membrane. It catalyses the reaction a plastoquinone + NADH + (n+1) H(+)(in) = a plastoquinol + NAD(+) + n H(+)(out). The catalysed reaction is a plastoquinone + NADPH + (n+1) H(+)(in) = a plastoquinol + NADP(+) + n H(+)(out). In terms of biological role, NDH shuttles electrons from NAD(P)H:plastoquinone, via FMN and iron-sulfur (Fe-S) centers, to quinones in the photosynthetic chain and possibly in a chloroplast respiratory chain. The immediate electron acceptor for the enzyme in this species is believed to be plastoquinone. Couples the redox reaction to proton translocation, and thus conserves the redox energy in a proton gradient. This is NAD(P)H-quinone oxidoreductase subunit 2 B, chloroplastic from Cucumis sativus (Cucumber).